The sequence spans 694 residues: Elongation factor G (694 aa).

The tr-type G domain maps to Glu10–Leu285. Residues Ala19–Thr26, Asp83–His87, and Asn137–Asp140 contribute to the GTP site.

This sequence belongs to the TRAFAC class translation factor GTPase superfamily. Classic translation factor GTPase family. EF-G/EF-2 subfamily.

The protein localises to the cytoplasm. Its function is as follows. Catalyzes the GTP-dependent ribosomal translocation step during translation elongation. During this step, the ribosome changes from the pre-translocational (PRE) to the post-translocational (POST) state as the newly formed A-site-bound peptidyl-tRNA and P-site-bound deacylated tRNA move to the P and E sites, respectively. Catalyzes the coordinated movement of the two tRNA molecules, the mRNA and conformational changes in the ribosome. The chain is Elongation factor G from Lactobacillus delbrueckii subsp. bulgaricus (strain ATCC 11842 / DSM 20081 / BCRC 10696 / JCM 1002 / NBRC 13953 / NCIMB 11778 / NCTC 12712 / WDCM 00102 / Lb 14).